Consider the following 168-residue polypeptide: Ribosome maturation factor RimM (168 aa).

A PRC barrel domain is found at 97–168 (PNEYYYYELL…RLVVKVPEWI (72 aa)).

It belongs to the RimM family. As to quaternary structure, binds ribosomal protein uS19.

It is found in the cytoplasm. In terms of biological role, an accessory protein needed during the final step in the assembly of 30S ribosomal subunit, possibly for assembly of the head region. Essential for efficient processing of 16S rRNA. May be needed both before and after RbfA during the maturation of 16S rRNA. It has affinity for free ribosomal 30S subunits but not for 70S ribosomes. The protein is Ribosome maturation factor RimM of Pseudothermotoga lettingae (strain ATCC BAA-301 / DSM 14385 / NBRC 107922 / TMO) (Thermotoga lettingae).